The sequence spans 131 residues: Small ribosomal subunit protein uS9 (131 aa).

The protein belongs to the universal ribosomal protein uS9 family.

The chain is Small ribosomal subunit protein uS9 from Mesoplasma florum (strain ATCC 33453 / NBRC 100688 / NCTC 11704 / L1) (Acholeplasma florum).